Here is a 136-residue protein sequence, read N- to C-terminus: Large ribosomal subunit protein uL16 (136 aa).

This sequence belongs to the universal ribosomal protein uL16 family. As to quaternary structure, part of the 50S ribosomal subunit.

Binds 23S rRNA and is also seen to make contacts with the A and possibly P site tRNAs. This Orientia tsutsugamushi (strain Boryong) (Rickettsia tsutsugamushi) protein is Large ribosomal subunit protein uL16.